Consider the following 327-residue polypeptide: tRNA uridine(34) hydroxylase (327 aa).

The Rhodanese domain occupies 122–218 (QENRCLVLDV…YGLKMGTGKW (97 aa)). The active-site Cysteine persulfide intermediate is cysteine 178.

Belongs to the TrhO family.

It carries out the reaction uridine(34) in tRNA + AH2 + O2 = 5-hydroxyuridine(34) in tRNA + A + H2O. In terms of biological role, catalyzes oxygen-dependent 5-hydroxyuridine (ho5U) modification at position 34 in tRNAs. In Chlamydia trachomatis serovar A (strain ATCC VR-571B / DSM 19440 / HAR-13), this protein is tRNA uridine(34) hydroxylase.